The chain runs to 130 residues: uncharacterized protein (130 aa).

An N-terminal signal peptide occupies residues 1–26; that stretch reads MINNFKGILIIILSFLFLLLFKYSNA. Asn58 carries N-linked (GlcNAc...) asparagine glycosylation.

The protein belongs to the Dictyostelium gerABC family.

The protein localises to the secreted. This is an uncharacterized protein from Dictyostelium discoideum (Social amoeba).